The chain runs to 101 residues: Large ribosomal subunit protein uL23 (101 aa).

Belongs to the universal ribosomal protein uL23 family. Part of the 50S ribosomal subunit. Contacts protein L29, and trigger factor when it is bound to the ribosome.

Its function is as follows. One of the early assembly proteins it binds 23S rRNA. One of the proteins that surrounds the polypeptide exit tunnel on the outside of the ribosome. Forms the main docking site for trigger factor binding to the ribosome. The chain is Large ribosomal subunit protein uL23 from Kocuria rhizophila (strain ATCC 9341 / DSM 348 / NBRC 103217 / DC2201).